A 260-amino-acid polypeptide reads, in one-letter code: MPRRLWPFGQTKTSADEQALSEQIDPHRIPKHIAIIMDGNGRWAKRRGLPRVAGHRAGVESLRRVLEVCEDYNIAYLTVYAFSTENWKRPADEVNALFDLLVEYLHRELNTLHSKGVRIRAIGKIEDLPGGPRRELEKAIAKTANNTRLVLNVALNYGGRFEIVEAVKSIARLAAEGKVNPDQIDEKYMSQYLYTADVPDPDLLIRPSGELRLSNFLLWQSAYTEIWVTPTLWPDFGRKEMVQAIVDYQGRDRRFGGVKV.

Asp-38 is a catalytic residue. Asp-38 provides a ligand contact to Mg(2+). Residues Gly-39–Arg-42, Trp-43, Arg-51, His-55, and Ser-83–Glu-85 contribute to the substrate site. Catalysis depends on Asn-86, which acts as the Proton acceptor. Substrate is bound by residues Trp-87, Arg-89, Arg-206, and Arg-212–Ser-214. Glu-225 is a binding site for Mg(2+).

It belongs to the UPP synthase family. As to quaternary structure, homodimer. It depends on Mg(2+) as a cofactor.

Functionally, catalyzes the condensation of isopentenyl diphosphate (IPP) with allylic pyrophosphates generating different type of terpenoids. In Heliobacterium mobile (Heliobacillus mobilis), this protein is Isoprenyl transferase.